The chain runs to 702 residues: Arylphorin subunit alpha (702 aa).

Positions 1-16 are cleaved as a signal peptide; it reads MKTVVILAGLVALALS. N-linked (GlcNAc...) asparagine glycans are attached at residues Asn-75 and Asn-214.

Belongs to the hemocyanin family. As to quaternary structure, arylphorin is a hexamer of subunits alpha and beta. As to expression, fat body.

The protein localises to the secreted. It localises to the extracellular space. In terms of biological role, arylphorin is a larval storage protein (LSP) which may serve as a storage protein used primarily as a source of aromatic amino acids for protein synthesis during metamorphosis. It is a constituent of the sclerotizing system of the cuticle, and serves as a carrier for ecdysteroid hormone. The protein is Arylphorin subunit alpha of Manduca sexta (Tobacco hawkmoth).